Consider the following 128-residue polypeptide: Hemoglobin subunit beta-1 (128 aa).

The Globin domain occupies 2-128 (HWTAEEKALV…VVDALSKGYH (127 aa)). Heme b is bound by residues histidine 51 and histidine 74.

The protein belongs to the globin family. In terms of assembly, hb 1 is a heterotetramer of two alpha and two beta-1 chains. In terms of tissue distribution, red blood cells (at protein level).

Involved in oxygen transport from gills to the various peripheral tissues. In Somniosus microcephalus (Greenland sleeper shark), this protein is Hemoglobin subunit beta-1.